The primary structure comprises 402 residues: Renin (402 aa).

An N-terminal signal peptide occupies residues Met1–Thr26. The propeptide at Ala27–Lys64 is activation peptide. The N-linked (GlcNAc...) asparagine glycan is linked to Asn69. Residues Tyr84–Ala399 form the Peptidase A1 domain. Residue Asp102 is part of the active site. Cys115 and Cys122 are oxidised to a cystine. Asn139 carries an N-linked (GlcNAc...) asparagine glycan. Residues Cys278 and Cys282 are joined by a disulfide bond. Asp287 is an active-site residue. Asn320 carries N-linked (GlcNAc...) asparagine glycosylation. Cys321 and Cys358 are joined by a disulfide.

It belongs to the peptidase A1 family. In terms of assembly, interacts with ATP6AP2.

The protein resides in the secreted. It is found in the membrane. The enzyme catalyses Cleavage of Leu-|-Xaa bond in angiotensinogen to generate angiotensin I.. Interaction with ATP6AP2 results in a 5-fold increased efficiency in angiotensinogen processing. Its function is as follows. Renin is a highly specific endopeptidase, whose only known function is to generate angiotensin I from angiotensinogen in the plasma, initiating a cascade of reactions that produce an elevation of blood pressure and increased sodium retention by the kidney. The chain is Renin (Ren1) from Rattus norvegicus (Rat).